Consider the following 341-residue polypeptide: 33 kDa chaperonin (341 aa).

Cystine bridges form between cysteine 245–cysteine 247 and cysteine 278–cysteine 281.

This sequence belongs to the HSP33 family. In terms of processing, under oxidizing conditions two disulfide bonds are formed involving the reactive cysteines. Under reducing conditions zinc is bound to the reactive cysteines and the protein is inactive.

The protein localises to the cytoplasm. Functionally, redox regulated molecular chaperone. Protects both thermally unfolding and oxidatively damaged proteins from irreversible aggregation. Plays an important role in the bacterial defense system toward oxidative stress. This Thermus thermophilus (strain ATCC BAA-163 / DSM 7039 / HB27) protein is 33 kDa chaperonin.